We begin with the raw amino-acid sequence, 67 residues long: Conotoxin TsMMSK-B021 (67 aa).

The first 20 residues, 1–20 (MMSKLGVLLTICLLLFPLTA), serve as a signal peptide directing secretion. A propeptide spanning residues 21–50 (VQLDGDQPADLPELRAQDFAPERSPWFDPV) is cleaved from the precursor. Cystine bridges form between cysteine 53-cysteine 65, cysteine 54-cysteine 61, and cysteine 58-cysteine 64. Proline 63 bears the 4-hydroxyproline mark.

The protein belongs to the conotoxin M superfamily. As to expression, expressed by the venom duct.

The protein resides in the secreted. The protein is Conotoxin TsMMSK-B021 of Conus tessulatus (Tessellate cone).